The primary structure comprises 149 residues: Transcription antitermination protein NusB (149 aa).

It belongs to the NusB family.

Functionally, involved in transcription antitermination. Required for transcription of ribosomal RNA (rRNA) genes. Binds specifically to the boxA antiterminator sequence of the ribosomal RNA (rrn) operons. The sequence is that of Transcription antitermination protein NusB from Acinetobacter baumannii (strain SDF).